The chain runs to 197 residues: UPF0637 protein LEUM_0496 (197 aa).

The protein belongs to the UPF0637 family.

This Leuconostoc mesenteroides subsp. mesenteroides (strain ATCC 8293 / DSM 20343 / BCRC 11652 / CCM 1803 / JCM 6124 / NCDO 523 / NBRC 100496 / NCIMB 8023 / NCTC 12954 / NRRL B-1118 / 37Y) protein is UPF0637 protein LEUM_0496.